Consider the following 523-residue polypeptide: Polyamine aminopropyltransferase (523 aa).

7 consecutive transmembrane segments (helical) span residues 20–40 (VLLA…LALL), 51–71 (IVAT…GALL), 88–108 (AVLG…FAFL), 116–136 (LVLA…VPLL), 164–184 (LGAL…LGMI), 186–206 (GAAV…IFLL), and 215–235 (LVTA…LLVH). Positions 203-478 (IFLLRHVVSG…APTPAVPSTA (276 aa)) are spermidine synthase. A PABS domain is found at 231 to 465 (TLLVHSHDIE…GDWGFALARL (235 aa)). Q261 is a binding site for S-methyl-5'-thioadenosine. D313 is a binding site for spermidine. S-methyl-5'-thioadenosine-binding positions include E333 and 365-366 (DA). D386 acts as the Proton acceptor in catalysis.

This sequence belongs to the spermidine/spermine synthase family. In terms of assembly, homodimer or homotetramer.

It localises to the cell membrane. The catalysed reaction is S-adenosyl 3-(methylsulfanyl)propylamine + putrescine = S-methyl-5'-thioadenosine + spermidine + H(+). Its pathway is amine and polyamine biosynthesis; spermidine biosynthesis; spermidine from putrescine: step 1/1. Functionally, catalyzes the irreversible transfer of a propylamine group from the amino donor S-adenosylmethioninamine (decarboxy-AdoMet) to putrescine (1,4-diaminobutane) to yield spermidine. In Mycobacterium bovis (strain ATCC BAA-935 / AF2122/97), this protein is Polyamine aminopropyltransferase.